Here is a 209-residue protein sequence, read N- to C-terminus: Outer-membrane lipoprotein LolB (209 aa).

A signal peptide spans 1 to 21 (MNNMKTFKFLTALFATAILTA). Cys-22 carries N-palmitoyl cysteine lipidation. Cys-22 carries S-diacylglycerol cysteine lipidation.

The protein belongs to the LolB family. As to quaternary structure, monomer.

It is found in the cell outer membrane. Its function is as follows. Plays a critical role in the incorporation of lipoproteins in the outer membrane after they are released by the LolA protein. The chain is Outer-membrane lipoprotein LolB from Haemophilus influenzae (strain 86-028NP).